The following is a 146-amino-acid chain: D-aminoacyl-tRNA deacylase (146 aa).

A Gly-cisPro motif, important for rejection of L-amino acids motif is present at residues 137–138 (GP).

The protein belongs to the DTD family. As to quaternary structure, homodimer.

Its subcellular location is the cytoplasm. The catalysed reaction is glycyl-tRNA(Ala) + H2O = tRNA(Ala) + glycine + H(+). The enzyme catalyses a D-aminoacyl-tRNA + H2O = a tRNA + a D-alpha-amino acid + H(+). Functionally, an aminoacyl-tRNA editing enzyme that deacylates mischarged D-aminoacyl-tRNAs. Also deacylates mischarged glycyl-tRNA(Ala), protecting cells against glycine mischarging by AlaRS. Acts via tRNA-based rather than protein-based catalysis; rejects L-amino acids rather than detecting D-amino acids in the active site. By recycling D-aminoacyl-tRNA to D-amino acids and free tRNA molecules, this enzyme counteracts the toxicity associated with the formation of D-aminoacyl-tRNA entities in vivo and helps enforce protein L-homochirality. The chain is D-aminoacyl-tRNA deacylase from Bacillus mycoides (strain KBAB4) (Bacillus weihenstephanensis).